The chain runs to 727 residues: Prolyl endopeptidase-like (727 aa).

Active-site charge relay system residues include Ser559, Asp645, and His690.

The protein belongs to the peptidase S9A family. As to quaternary structure, homodimer. Interacts with the AP-1 complex.

The protein localises to the cytoplasm. It localises to the cytosol. Its subcellular location is the golgi apparatus. The protein resides in the trans-Golgi network. It is found in the cytoskeleton. The protein localises to the nucleus. Functionally, serine peptidase whose precise substrate specificity remains unclear. Does not cleave peptides after a arginine or lysine residue. Regulates trans-Golgi network morphology and sorting by regulating the membrane binding of the AP-1 complex. May play a role in the regulation of synaptic vesicle exocytosis. In Macaca fascicularis (Crab-eating macaque), this protein is Prolyl endopeptidase-like (PREPL).